Consider the following 719-residue polypeptide: Translation initiation factor IF-2 (719 aa).

The span at 54 to 67 shows a compositional bias: basic and acidic residues; that stretch reads NKEETKPNVDEKPP. 2 disordered regions span residues 54-75 and 97-122; these read NKEE…LTDN and STKN…KRKN. Over residues 109-122 the composition is skewed to basic residues; the sequence is KDKKKKNKKDKRKN. A tr-type G domain is found at 221–390; that stretch reads HRSPVVTVMG…LLVSEMSELK (170 aa). Residues 230-237 are G1; the sequence is GHVDHGKT. Position 230-237 (230-237) interacts with GTP; that stretch reads GHVDHGKT. The tract at residues 255–259 is G2; the sequence is GITQH. A G3 region spans residues 276-279; sequence DTPG. GTP-binding positions include 276–280 and 330–333; these read DTPGH and NKMD. The G4 stretch occupies residues 330–333; it reads NKMD. Residues 366–368 are G5; that stretch reads SAR.

Belongs to the TRAFAC class translation factor GTPase superfamily. Classic translation factor GTPase family. IF-2 subfamily.

It localises to the cytoplasm. One of the essential components for the initiation of protein synthesis. Protects formylmethionyl-tRNA from spontaneous hydrolysis and promotes its binding to the 30S ribosomal subunits. Also involved in the hydrolysis of GTP during the formation of the 70S ribosomal complex. The protein is Translation initiation factor IF-2 of Alkaliphilus oremlandii (strain OhILAs) (Clostridium oremlandii (strain OhILAs)).